A 201-amino-acid chain; its full sequence is MARYTGPATRKSRRLRVDLVGGDMAFERRPYPPGQAGRARIKESEYLLQLQEKQKARFIYGVMEKQFRRYYAEANRRAGKTGENLVVLLESRLDNVVYRAGLANTRRQARQLVSHGHFTVNGKAIDVPSFRVSQYDIINVREKSQKMNWFEEAQDNLVDAVVPAWLQVVPENLRILVHQLPERAQIDIPLQEQLIVEFYSK.

The S4 RNA-binding domain occupies 91 to 151 (SRLDNVVYRA…EKSQKMNWFE (61 aa)).

It belongs to the universal ribosomal protein uS4 family. In terms of assembly, part of the 30S ribosomal subunit. Contacts protein S5. The interaction surface between S4 and S5 is involved in control of translational fidelity.

Functionally, one of the primary rRNA binding proteins, it binds directly to 16S rRNA where it nucleates assembly of the body of the 30S subunit. With S5 and S12 plays an important role in translational accuracy. The polypeptide is Small ribosomal subunit protein uS4 (Corynebacterium glutamicum (strain R)).